Here is a 503-residue protein sequence, read N- to C-terminus: Cobyric acid synthase (503 aa).

Positions 260-453 (KIGVAAIYFP…FHALFDESSV (194 aa)) constitute a GATase cobBQ-type domain. Cys341 serves as the catalytic Nucleophile. The active site involves His445.

Belongs to the CobB/CobQ family. CobQ subfamily.

Its pathway is cofactor biosynthesis; adenosylcobalamin biosynthesis. Its function is as follows. Catalyzes amidations at positions B, D, E, and G on adenosylcobyrinic A,C-diamide. NH(2) groups are provided by glutamine, and one molecule of ATP is hydrogenolyzed for each amidation. This is Cobyric acid synthase from Pelodictyon phaeoclathratiforme (strain DSM 5477 / BU-1).